A 79-amino-acid polypeptide reads, in one-letter code: MFVKTGDKVKVIAGSEKGKEGTVLSVNVKKNRVVVKGVNMIKKATKASASNANGGVVETEGSIHASNVKVIAKAESNKD.

Belongs to the universal ribosomal protein uL24 family. In terms of assembly, part of the 50S ribosomal subunit.

Functionally, one of two assembly initiator proteins, it binds directly to the 5'-end of the 23S rRNA, where it nucleates assembly of the 50S subunit. One of the proteins that surrounds the polypeptide exit tunnel on the outside of the subunit. This is Large ribosomal subunit protein uL24 from Lactobacillus delbrueckii subsp. bulgaricus (strain ATCC BAA-365 / Lb-18).